The chain runs to 536 residues: Maintenance of mitochondrial morphology protein 1 (536 aa).

The Lumenal segment spans residues 1–25 (MAGPSNQTQPPPPVLTQPSLSFTQG). A helical membrane pass occupies residues 26-46 (LLVGQLSVVLLIGAFIKFFIF). Residues 47–536 (GEAPPHPSRN…GSMPDPVVVT (490 aa)) lie on the Cytoplasmic side of the membrane. Disordered regions lie at residues 52–135 (HPSR…SHQP), 275–331 (GPGT…ATAA), 416–467 (GRTG…GGSM), and 505–536 (YGGAQGGGGGGGRGGEEQFAIPGSMPDPVVVT). Composition is skewed to polar residues over residues 69 to 81 (YSLNSISADSSPR), 88 to 105 (STSNILRPVPSSSTNTRS), and 112 to 121 (YSATPTNPTS). Residues 122-132 (KHSRSRPHHSS) show a composition bias toward basic residues. The SMP-LTD domain occupies 134–409 (QPESLDWFNV…EPRVQVVGLP (276 aa)). The segment covering 321–331 (TNTNTAGATAA) has biased composition (low complexity). Gly residues-rich tracts occupy residues 442 to 467 (TAGGDGVGVRGGGGGGGVGGSGGGSM) and 507 to 517 (GAQGGGGGGGR).

It belongs to the MMM1 family. In terms of assembly, homodimer. Component of the ER-mitochondria encounter structure (ERMES) or MDM complex, composed of MMM1, MDM10, MDM12 and MDM34. An MMM1 homodimer associates with one molecule of MDM12 on each side in a pairwise head-to-tail manner, and the SMP-LTD domains of MMM1 and MDM12 generate a continuous hydrophobic tunnel for phospholipid trafficking.

Its subcellular location is the endoplasmic reticulum membrane. Component of the ERMES/MDM complex, which serves as a molecular tether to connect the endoplasmic reticulum (ER) and mitochondria. Components of this complex are involved in the control of mitochondrial shape and protein biogenesis, and function in nonvesicular lipid trafficking between the ER and mitochondria. The MDM12-MMM1 subcomplex functions in the major beta-barrel assembly pathway that is responsible for biogenesis of all outer membrane beta-barrel proteins, and acts in a late step after the SAM complex. The MDM10-MDM12-MMM1 subcomplex further acts in the TOM40-specific pathway after the action of the MDM12-MMM1 complex. Essential for establishing and maintaining the structure of mitochondria and maintenance of mtDNA nucleoids. The sequence is that of Maintenance of mitochondrial morphology protein 1 from Ajellomyces dermatitidis (strain ER-3 / ATCC MYA-2586) (Blastomyces dermatitidis).